We begin with the raw amino-acid sequence, 309 residues long: Mas-related G-protein coupled receptor member E (309 aa).

Topologically, residues 1-21 (MSLRVHTHSPSTQGDMAFNLT) are extracellular. Asparagine 19 carries an N-linked (GlcNAc...) asparagine glycan. The chain crosses the membrane as a helical span at residues 22-42 (ILSLTELLSLGGLLGNGVALW). Residues 43–59 (LLNQNVYRNPFSIYLLD) lie on the Cytoplasmic side of the membrane. The chain crosses the membrane as a helical span at residues 60-80 (VACADLIFLCCHMVAIIPELL). Residues 81–91 (QDQLNFPEFVH) lie on the Extracellular side of the membrane. Residues 92-112 (ISLIMLRFFCYIVGLSLLVAI) traverse the membrane as a helical segment. Residues 113 to 132 (STEQCLATLFPSGYLCRRPR) lie on the Cytoplasmic side of the membrane. A helical membrane pass occupies residues 133-153 (YLTTCVCAFIWVLCLLLDLLL). Residues 154-168 (SGACTQFFGAPSYHL) are Extracellular-facing. The helical transmembrane segment at 169–189 (CGMLWLVVAVLLAALCCTMCV) threads the bilayer. The Cytoplasmic segment spans residues 190–212 (TSLLLLLRVERGPERHQPRGFPT). Residues 213–233 (LVLLVILLFLFCGLPFGIFWL) traverse the membrane as a helical segment. The Extracellular portion of the chain corresponds to 234–247 (SKNLSWHTPLYFYH). The N-linked (GlcNAc...) asparagine glycan is linked to asparagine 236. A helical transmembrane segment spans residues 248 to 268 (FSFFMASVHSAAKPAIYFFLG). At 269 to 309 (STPGQRFQEPLRLVLQRALGDEAELGAVREASQGGLVDMTV) the chain is on the cytoplasmic side.

Belongs to the G-protein coupled receptor 1 family. Mas subfamily.

Its subcellular location is the cell membrane. Orphan receptor. May regulate nociceptor function and/or development, including the sensation or modulation of pain. The polypeptide is Mas-related G-protein coupled receptor member E (Mrgpre) (Rattus norvegicus (Rat)).